The chain runs to 307 residues: Probable deoxyhypusine synthase (307 aa).

Residue Lys278 is the Nucleophile of the active site.

This sequence belongs to the deoxyhypusine synthase family. It depends on NAD(+) as a cofactor.

It catalyses the reaction [eIF5A protein]-L-lysine + spermidine = [eIF5A protein]-deoxyhypusine + propane-1,3-diamine. It functions in the pathway protein modification; eIF5A hypusination. Catalyzes the NAD-dependent oxidative cleavage of spermidine and the subsequent transfer of the butylamine moiety of spermidine to the epsilon-amino group of a specific lysine residue of the eIF-5A precursor protein to form the intermediate deoxyhypusine residue. The chain is Probable deoxyhypusine synthase (dys) from Methanothermobacter thermautotrophicus (strain ATCC 29096 / DSM 1053 / JCM 10044 / NBRC 100330 / Delta H) (Methanobacterium thermoautotrophicum).